A 181-amino-acid polypeptide reads, in one-letter code: Early upstream open reading frame (181 aa).

Belongs to the EUO family.

This chain is Early upstream open reading frame, found in Chlamydia caviae (strain ATCC VR-813 / DSM 19441 / 03DC25 / GPIC) (Chlamydophila caviae).